The chain runs to 498 residues: Zinc finger protein 395 (498 aa).

The interval 129-165 (QKPLSSPIEQSLPTSPGATSTSAQRSVSRSIDVPKRR) is disordered. Residues 130-157 (KPLSSPIEQSLPTSPGATSTSAQRSVSR) are compositionally biased toward polar residues. The short motif at 171–180 (MDEMMAAMVL) is the Nuclear export signal element. Positions 209 to 245 (KEGGDVSDSGSSTTSGHWSASSGVSTPSPPHTDASPK) are disordered. The segment covering 214 to 231 (VSDSGSSTTSGHWSASSG) has biased composition (low complexity). The C2H2-type zinc finger occupies 285–310 (YKCLWPNCGKLLRSIVGIKRHVKTQH).

Its subcellular location is the cytoplasm. It localises to the nucleus. This Xenopus laevis (African clawed frog) protein is Zinc finger protein 395 (znf395).